The following is a 159-amino-acid chain: Urease accessory protein UreE (159 aa).

The protein belongs to the UreE family.

Its subcellular location is the cytoplasm. Involved in urease metallocenter assembly. Binds nickel. Probably functions as a nickel donor during metallocenter assembly. This chain is Urease accessory protein UreE, found in Vibrio parahaemolyticus.